The primary structure comprises 125 residues: uncharacterized protein (125 aa).

A chloroplast-targeting transit peptide spans 1-46 (MFFDTKVLNYPTIHKSISMASTMQRTSSSAASNERQLSQLQRRAPS).

Its subcellular location is the plastid. It is found in the chloroplast. This is an uncharacterized protein from Arabidopsis thaliana (Mouse-ear cress).